The following is a 101-amino-acid chain: Transcription factor ILI2 (101 aa).

The tract at residues 1-22 (MSSSRRSRTSSRLAAAPPPTDE) is disordered. One can recognise a bHLH domain in the interval 8 to 63 (RTSSRLAAAPPPTDEQMAELISKLQAVLPTRGGEANAKQASSAEVLQEACRYIRRL).

This sequence belongs to the bHLH protein family.

Its function is as follows. Atypical and probable non DNA-binding bHLH transcription factor that integrates multiple signaling pathways to regulate cell elongation and plant development. In Oryza sativa subsp. indica (Rice), this protein is Transcription factor ILI2 (ILI2).